A 314-amino-acid polypeptide reads, in one-letter code: Methionyl-tRNA formyltransferase (314 aa).

Residue 110–113 (SLLP) coordinates (6S)-5,6,7,8-tetrahydrofolate.

It belongs to the Fmt family.

It carries out the reaction L-methionyl-tRNA(fMet) + (6R)-10-formyltetrahydrofolate = N-formyl-L-methionyl-tRNA(fMet) + (6S)-5,6,7,8-tetrahydrofolate + H(+). Attaches a formyl group to the free amino group of methionyl-tRNA(fMet). The formyl group appears to play a dual role in the initiator identity of N-formylmethionyl-tRNA by promoting its recognition by IF2 and preventing the misappropriation of this tRNA by the elongation apparatus. This chain is Methionyl-tRNA formyltransferase, found in Lactobacillus acidophilus (strain ATCC 700396 / NCK56 / N2 / NCFM).